Reading from the N-terminus, the 55-residue chain is Large ribosomal subunit protein bL33 (55 aa).

This sequence belongs to the bacterial ribosomal protein bL33 family.

This chain is Large ribosomal subunit protein bL33, found in Parvibaculum lavamentivorans (strain DS-1 / DSM 13023 / NCIMB 13966).